The chain runs to 230 residues: Porin OmpL (230 aa).

Residues 1–20 form the signal peptide; the sequence is MKKINAIILLSSLTSASVFA.

This sequence belongs to the oligogalacturonate-specific porin KdgM (TC 1.B.35) family. OmpL subfamily.

The protein localises to the cell outer membrane. In terms of biological role, outer membrane channel protein that allows an efficient diffusion of low-molecular-weight solutes such as small sugars and tetraglycine. However, the specific substrate recognized by the OmpL channel is unknown. The protein is Porin OmpL (ompL) of Escherichia coli (strain K12).